A 194-amino-acid polypeptide reads, in one-letter code: MLLPTQTSWVILAGGQASRMGGKDKGLVELNGSPLIQYVINKLSQQDVSITINANRNLDSYQAFAPVVSDSFPDYPGPLGGIHAGLKNASTDWVGFVPCDSPQISDDLVERFCAAVKEDSDILVAHDGEFKQPVFTLFHKRVLPKLEAFLERGDRKIILLYKECVTEYVDFSDAPNCFVNLNTPEELTQFGTLQ.

GTP-binding positions include 12–14, Lys25, Asn53, Asp70, and Asp100; that span reads LAG. Residue Asp100 participates in Mg(2+) binding.

This sequence belongs to the MobA family. Monomer. Mg(2+) serves as cofactor.

Its subcellular location is the cytoplasm. The enzyme catalyses Mo-molybdopterin + GTP + H(+) = Mo-molybdopterin guanine dinucleotide + diphosphate. Transfers a GMP moiety from GTP to Mo-molybdopterin (Mo-MPT) cofactor (Moco or molybdenum cofactor) to form Mo-molybdopterin guanine dinucleotide (Mo-MGD) cofactor. This chain is Molybdenum cofactor guanylyltransferase, found in Vibrio atlanticus (strain LGP32) (Vibrio splendidus (strain Mel32)).